The chain runs to 121 residues: Putative RNase MJ0127 (121 aa).

Active-site residues include Arg-76 and His-81. The short motif at 76 to 83 (RDKLIHHY) is the RX(4)HXY motif element. Position 83 is an O-di-AMP-tyrosine (Tyr-83).

The protein belongs to the HepT RNase toxin family. Homodimer, probably forms a complex with cognate antitoxin MJ0128. Modified by cognate antitoxin MJ0128; probably at least 2 successive AMPylation events occur on Tyr-83.

Functionally, probable toxic component of a putative type VII toxin-antitoxin (TA) system, probably an RNase. Probably neutralized by cognate antitoxin MJ0128. Neutralization may be due to AMPylation by MJ0128. This is Putative RNase MJ0127 from Methanocaldococcus jannaschii (strain ATCC 43067 / DSM 2661 / JAL-1 / JCM 10045 / NBRC 100440) (Methanococcus jannaschii).